Here is a 305-residue protein sequence, read N- to C-terminus: UDP-N-acetylenolpyruvoylglucosamine reductase 2 (305 aa).

The FAD-binding PCMH-type domain occupies 33 to 197; it reads VGGKADVFVA…LEARFELEEG (165 aa). Residue Arg176 is part of the active site. Ser226 functions as the Proton donor in the catalytic mechanism. Glu296 is an active-site residue.

Belongs to the MurB family. It depends on FAD as a cofactor.

The protein localises to the cytoplasm. The enzyme catalyses UDP-N-acetyl-alpha-D-muramate + NADP(+) = UDP-N-acetyl-3-O-(1-carboxyvinyl)-alpha-D-glucosamine + NADPH + H(+). It participates in cell wall biogenesis; peptidoglycan biosynthesis. Cell wall formation. The sequence is that of UDP-N-acetylenolpyruvoylglucosamine reductase 2 from Bacillus thuringiensis subsp. konkukian (strain 97-27).